The primary structure comprises 315 residues: NADH-cytochrome b5 reductase-like (315 aa).

Positions 19–55 constitute an Oxidoreductase-like domain; sequence RPTEPLPSQCCGSGCSPCVFDLYHRDLARWEAAQASK. The FAD-binding FR-type domain maps to 75–177; sequence ETFVAFCIIA…RGPFGDFFYK (103 aa). Residues 157-172 and 182-214 each bind FAD; these read ESWR…GPFG and GELL…TFVT.

The protein belongs to the flavoprotein pyridine nucleotide cytochrome reductase family. It depends on FAD as a cofactor.

The catalysed reaction is 2 Fe(III)-[cytochrome b5] + NADH = 2 Fe(II)-[cytochrome b5] + NAD(+) + H(+). NADH-cytochrome b5 reductases are involved in desaturation and elongation of fatty acids, cholesterol biosynthesis, drug metabolism, and, in erythrocyte, methemoglobin reduction. The polypeptide is NADH-cytochrome b5 reductase-like (CYB5RL) (Homo sapiens (Human)).